The following is a 470-amino-acid chain: Aromatic amino acid aminotransferase C569.07 (470 aa).

It belongs to the class-I pyridoxal-phosphate-dependent aminotransferase family. It depends on pyridoxal 5'-phosphate as a cofactor.

The protein localises to the cytoplasm. It catalyses the reaction an aromatic L-alpha-amino acid + 2-oxoglutarate = an aromatic oxo-acid + L-glutamate. Has aromatic amino acid transaminase activity. In Schizosaccharomyces pombe (strain 972 / ATCC 24843) (Fission yeast), this protein is Aromatic amino acid aminotransferase C569.07.